The primary structure comprises 149 residues: F420H(2)-dependent quinone reductase MT1299 (149 aa).

Coenzyme F420-(gamma-Glu)n-binding positions include 48–50 (AKT), 54–59 (RTTSLT), 70–73 (VASK), 81–85 (GWYHN), and Y130.

This sequence belongs to the F420H(2)-dependent quinone reductase family.

The protein resides in the cell membrane. The enzyme catalyses oxidized coenzyme F420-(gamma-L-Glu)(n) + a quinol + H(+) = reduced coenzyme F420-(gamma-L-Glu)(n) + a quinone. In terms of biological role, involved in a F420-dependent anti-oxidant mechanism that protects M.tuberculosis against oxidative stress and bactericidal agents. Catalyzes the F420H(2)-dependent two-electron reduction of quinones to dihydroquinones, thereby preventing the formation of cytotoxic semiquinones obtained by the one-electron reduction pathway. In vitro, catalyzes the reduction of menadione to menadiol; since menaquinone is the sole quinone electron carrier in the respiratory chain in M.tuberculosis, the physiological electron acceptor for Fqr-mediated F420H(2) oxidation is therefore likely to be the endogenous menaquinone found in the membrane fraction of M.tuberculosis. This chain is F420H(2)-dependent quinone reductase MT1299, found in Mycobacterium tuberculosis (strain CDC 1551 / Oshkosh).